Reading from the N-terminus, the 734-residue chain is Photosystem I P700 chlorophyll a apoprotein A2 (734 aa).

8 helical membrane passes run 46-69 (IFASHFGQLAIIFLWTSGNLFHVA), 135-158 (LYIGALFLLFLSAVSLLGGWLHLQ), 175-199 (LNHHLSGLFGVSSLAWTGHLVHVAI), 273-291 (MAHHHLAIAFLFLIAGHMY), 330-353 (LHFQLGLALASLGVITSLVAQHMY), 369-395 (AALYTHHQYIAGFIMTGAFAHGAIFFI), 417-439 (AIISHLSWASLFLGFHTLGLYVH), and 517-535 (FLVHHAIALGLHTTTLILV). Residues Cys-559 and Cys-568 each coordinate [4Fe-4S] cluster. Transmembrane regions (helical) follow at residues 575-596 (AFYLAVFWMLNTIGWVTFYWHW) and 643-665 (LSVWAWMFLFGHLVWATGFMFLI). The chlorophyll a site is built by His-654, Met-662, and Tyr-670. A phylloquinone-binding site is contributed by Trp-671. Residues 707–727 (LVGLAHFSVGYIFTYAAFLIA) traverse the membrane as a helical segment.

The protein belongs to the PsaA/PsaB family. The PsaA/B heterodimer binds the P700 chlorophyll special pair and subsequent electron acceptors. PSI consists of a core antenna complex that captures photons, and an electron transfer chain that converts photonic excitation into a charge separation. The eukaryotic PSI reaction center is composed of at least 11 subunits. P700 is a chlorophyll a/chlorophyll a' dimer, A0 is one or more chlorophyll a, A1 is one or both phylloquinones and FX is a shared 4Fe-4S iron-sulfur center. serves as cofactor.

The protein localises to the plastid. It is found in the chloroplast thylakoid membrane. The catalysed reaction is reduced [plastocyanin] + hnu + oxidized [2Fe-2S]-[ferredoxin] = oxidized [plastocyanin] + reduced [2Fe-2S]-[ferredoxin]. Functionally, psaA and PsaB bind P700, the primary electron donor of photosystem I (PSI), as well as the electron acceptors A0, A1 and FX. PSI is a plastocyanin-ferredoxin oxidoreductase, converting photonic excitation into a charge separation, which transfers an electron from the donor P700 chlorophyll pair to the spectroscopically characterized acceptors A0, A1, FX, FA and FB in turn. Oxidized P700 is reduced on the lumenal side of the thylakoid membrane by plastocyanin. This is Photosystem I P700 chlorophyll a apoprotein A2 from Populus alba (White poplar).